The chain runs to 209 residues: Lipopolysaccharide export system protein LptC (209 aa).

A helical membrane pass occupies residues 7–26 (NIRWNVILGVIALCALAWFY).

It belongs to the LptC family. In terms of assembly, component of the lipopolysaccharide transport and assembly complex. Interacts with LptA and the LptBFG transporter complex.

Its subcellular location is the cell inner membrane. In terms of biological role, involved in the assembly of lipopolysaccharide (LPS). Required for the translocation of LPS from the inner membrane to the outer membrane. Facilitates the transfer of LPS from the inner membrane to the periplasmic protein LptA. Could be a docking site for LptA. The sequence is that of Lipopolysaccharide export system protein LptC from Haemophilus influenzae (strain ATCC 51907 / DSM 11121 / KW20 / Rd).